Reading from the N-terminus, the 328-residue chain is Putative glycosyltransferase 41 (328 aa).

It belongs to the glycosyltransferase group 1 family. Glycosyltransferase 4 subfamily.

The sequence is that of Putative glycosyltransferase 41 (SIFV0041) from Sulfolobus islandicus filamentous virus (isolate Iceland/Hveragerdi) (SIFV).